The following is a 210-amino-acid chain: Small ribosomal subunit protein uS3 (210 aa).

Residues 38-106 (IRAWLKKRLA…EVQINIVEIR (69 aa)) enclose the KH type-2 domain.

This sequence belongs to the universal ribosomal protein uS3 family. In terms of assembly, part of the 30S ribosomal subunit. Forms a tight complex with proteins S10 and S14.

In terms of biological role, binds the lower part of the 30S subunit head. Binds mRNA in the 70S ribosome, positioning it for translation. This chain is Small ribosomal subunit protein uS3, found in Magnetococcus marinus (strain ATCC BAA-1437 / JCM 17883 / MC-1).